The following is a 127-amino-acid chain: Aspartate 1-decarboxylase (127 aa).

The Schiff-base intermediate with substrate; via pyruvic acid role is filled by Ser-25. Residue Ser-25 is modified to Pyruvic acid (Ser). Thr-57 contacts substrate. Tyr-58 functions as the Proton donor in the catalytic mechanism. Substrate is bound at residue 73–75 (GAA).

It belongs to the PanD family. As to quaternary structure, heterooctamer of four alpha and four beta subunits. The cofactor is pyruvate. In terms of processing, is synthesized initially as an inactive proenzyme, which is activated by self-cleavage at a specific serine bond to produce a beta-subunit with a hydroxyl group at its C-terminus and an alpha-subunit with a pyruvoyl group at its N-terminus.

Its subcellular location is the cytoplasm. The enzyme catalyses L-aspartate + H(+) = beta-alanine + CO2. The protein operates within cofactor biosynthesis; (R)-pantothenate biosynthesis; beta-alanine from L-aspartate: step 1/1. Functionally, catalyzes the pyruvoyl-dependent decarboxylation of aspartate to produce beta-alanine. This is Aspartate 1-decarboxylase from Shouchella clausii (strain KSM-K16) (Alkalihalobacillus clausii).